The following is a 382-amino-acid chain: Intermediate transcription factor 3 large subunit (382 aa).

Belongs to the poxviruses A23 family. In terms of assembly, heterodimer of a 45 kDa and a 32 kDa subunit.

Functionally, acts with RNA polymerase to initiate transcription from intermediate gene promoters. This chain is Intermediate transcription factor 3 large subunit (VITF3L), found in Ectromelia virus (strain Moscow) (ECTV).